Here is a 299-residue protein sequence, read N- to C-terminus: Serine/threonine-protein kinase 1 (299 aa).

One can recognise a Protein kinase domain in the interval 39–277; it reads IATKPMFEGG…FKGLVSHPWF (239 aa). Residues 45-53 and K66 each bind ATP; that span reads FEGGRRNNV. Catalysis depends on D153, which acts as the Proton acceptor.

This sequence belongs to the protein kinase superfamily. Ser/Thr protein kinase family.

The protein resides in the virion. It localises to the host cytoplasm. The catalysed reaction is L-seryl-[protein] + ATP = O-phospho-L-seryl-[protein] + ADP + H(+). It catalyses the reaction L-threonyl-[protein] + ATP = O-phospho-L-threonyl-[protein] + ADP + H(+). Its function is as follows. Essential for viral replication. It may mediate the virus progression through DNA replication. The sequence is that of Serine/threonine-protein kinase 1 from African swine fever virus (isolate Tick/Malawi/Lil 20-1/1983) (ASFV).